Consider the following 370-residue polypeptide: Anhydro-N-acetylmuramic acid kinase (370 aa).

An ATP-binding site is contributed by 13–20 (GTSMDGVD).

The protein belongs to the anhydro-N-acetylmuramic acid kinase family.

The catalysed reaction is 1,6-anhydro-N-acetyl-beta-muramate + ATP + H2O = N-acetyl-D-muramate 6-phosphate + ADP + H(+). It functions in the pathway amino-sugar metabolism; 1,6-anhydro-N-acetylmuramate degradation. The protein operates within cell wall biogenesis; peptidoglycan recycling. Its function is as follows. Catalyzes the specific phosphorylation of 1,6-anhydro-N-acetylmuramic acid (anhMurNAc) with the simultaneous cleavage of the 1,6-anhydro ring, generating MurNAc-6-P. Is required for the utilization of anhMurNAc either imported from the medium or derived from its own cell wall murein, and thus plays a role in cell wall recycling. This is Anhydro-N-acetylmuramic acid kinase from Vibrio parahaemolyticus serotype O3:K6 (strain RIMD 2210633).